The sequence spans 214 residues: MTIENEALTLKKRFRGYFPVVVDVETAGFNAQTDALLEICAVTLSMDENGDLHPASTIHFHIEPFEGANLEKEALEFNGIRDPFSPLRGAVSEQEALKEIYKLIRKEQKAADCSRAIMVAHNAAFDLSFVNAANERCKLKRVPFHPFATFDTATLSGLAYGQTVLAKACKAAGMEFDNREAHSALYDTQQTAELFCGIVNKWKALGGWPLVDEE.

The Exonuclease domain maps to 20 to 195 (VVVDVETAGF…YDTQQTAELF (176 aa)). Mg(2+)-binding residues include Asp23, Glu25, His182, and Asp187. His182 acts as the Proton donor/acceptor in catalysis.

It belongs to the RNase T family. Homodimer. Mg(2+) serves as cofactor.

Functionally, trims short 3' overhangs of a variety of RNA species, leaving a one or two nucleotide 3' overhang. Responsible for the end-turnover of tRNA: specifically removes the terminal AMP residue from uncharged tRNA (tRNA-C-C-A). Also appears to be involved in tRNA biosynthesis. This Vibrio campbellii (strain ATCC BAA-1116) protein is Ribonuclease T.